The sequence spans 507 residues: Maturase K (507 aa).

Belongs to the intron maturase 2 family. MatK subfamily.

The protein resides in the plastid. The protein localises to the chloroplast. Its function is as follows. Usually encoded in the trnK tRNA gene intron. Probably assists in splicing its own and other chloroplast group II introns. This chain is Maturase K, found in Calocedrus decurrens (California incense-cedar).